A 393-amino-acid polypeptide reads, in one-letter code: Bifunctional enzyme IspD/IspF (393 aa).

The 2-C-methyl-D-erythritol 4-phosphate cytidylyltransferase stretch occupies residues 1–234 (MTISQRTAAI…ARLAAQLGDI (234 aa)). The tract at residues 235-393 (RTGTGYDVHA…SATIRLPWSA (159 aa)) is 2-C-methyl-D-erythritol 2,4-cyclodiphosphate synthase. Residues Asp241 and His243 each contribute to the a divalent metal cation site. Residues 241–243 (DVH) and 267–268 (HS) each bind 4-CDP-2-C-methyl-D-erythritol 2-phosphate. A divalent metal cation is bound at residue His275. Residues 289–291 (DIG), 365–368 (TTSE), Phe372, and Arg375 contribute to the 4-CDP-2-C-methyl-D-erythritol 2-phosphate site.

In the N-terminal section; belongs to the IspD/TarI cytidylyltransferase family. IspD subfamily. It in the C-terminal section; belongs to the IspF family. Requires a divalent metal cation as cofactor.

It carries out the reaction 2-C-methyl-D-erythritol 4-phosphate + CTP + H(+) = 4-CDP-2-C-methyl-D-erythritol + diphosphate. The enzyme catalyses 4-CDP-2-C-methyl-D-erythritol 2-phosphate = 2-C-methyl-D-erythritol 2,4-cyclic diphosphate + CMP. It participates in isoprenoid biosynthesis; isopentenyl diphosphate biosynthesis via DXP pathway; isopentenyl diphosphate from 1-deoxy-D-xylulose 5-phosphate: step 2/6. Its pathway is isoprenoid biosynthesis; isopentenyl diphosphate biosynthesis via DXP pathway; isopentenyl diphosphate from 1-deoxy-D-xylulose 5-phosphate: step 4/6. Bifunctional enzyme that catalyzes the formation of 4-diphosphocytidyl-2-C-methyl-D-erythritol from CTP and 2-C-methyl-D-erythritol 4-phosphate (MEP) (IspD), and catalyzes the conversion of 4-diphosphocytidyl-2-C-methyl-D-erythritol 2-phosphate (CDP-ME2P) to 2-C-methyl-D-erythritol 2,4-cyclodiphosphate (ME-CPP) with a corresponding release of cytidine 5-monophosphate (CMP) (IspF). The polypeptide is Bifunctional enzyme IspD/IspF (Bradyrhizobium sp. (strain BTAi1 / ATCC BAA-1182)).